The sequence spans 128 residues: Large ribosomal subunit protein bL17 (128 aa).

The protein belongs to the bacterial ribosomal protein bL17 family. In terms of assembly, part of the 50S ribosomal subunit. Contacts protein L32.

The chain is Large ribosomal subunit protein bL17 from Streptococcus pneumoniae serotype 4 (strain ATCC BAA-334 / TIGR4).